Reading from the N-terminus, the 1008-residue chain is PAN2-PAN3 deadenylation complex catalytic subunit PAN2 (1008 aa).

WD repeat units lie at residues 29–68, 110–149, 158–198, 200–236, and 277–316; these read GQLT…PYSR, PSLG…VTRV, HMAG…FSDV, VQDN…AMAP, and AEVA…SFAE. Positions 314 to 449 are linker; the sequence is FAEFSAPTAF…TCTEASMSSK (136 aa). Residues 450-755 form the USP domain; that stretch reads KVPRLYRKLE…RTVMMVYAVG (306 aa). The region spanning 808–976 is the Exonuclease domain; sequence AIDAEFVVLK…EDSHTALLLY (169 aa). Residues Asp-810, Glu-812, Asp-915, and Asp-968 each contribute to the a divalent metal cation site.

Belongs to the peptidase C19 family. PAN2 subfamily. As to quaternary structure, forms a heterotrimer with an asymmetric homodimer of the regulatory subunit PAN3 to form the poly(A)-nuclease (PAN) deadenylation complex. The cofactor is a divalent metal cation.

The protein localises to the cytoplasm. The catalysed reaction is Exonucleolytic cleavage of poly(A) to 5'-AMP.. Positively regulated by the regulatory subunit PAN3. Its function is as follows. Catalytic subunit of the poly(A)-nuclease (PAN) deadenylation complex, one of two cytoplasmic mRNA deadenylases involved in mRNA turnover. PAN specifically shortens poly(A) tails of RNA and the activity is stimulated by poly(A)-binding protein PAB1. PAN deadenylation is followed by rapid degradation of the shortened mRNA tails by the CCR4-NOT complex. Deadenylated mRNAs are then degraded by two alternative mechanisms, namely exosome-mediated 3'-5' exonucleolytic degradation, or deadenylation-dependent mRNA decaping and subsequent 5'-3' exonucleolytic degradation by XRN1. May also be involved in post-transcriptional maturation of mRNA poly(A) tails. This is PAN2-PAN3 deadenylation complex catalytic subunit PAN2 from Yarrowia lipolytica (strain CLIB 122 / E 150) (Yeast).